We begin with the raw amino-acid sequence, 2803 residues long: Microtubule-associated protein 1A (2803 aa).

A phosphoserine mark is found at Ser114, Ser117, Ser118, Ser121, and Ser155. The residue at position 177 (Tyr177) is a Phosphotyrosine. 2 disordered regions span residues Gly302 to Pro466 and Ile486 to Thr516. 3 positions are modified to phosphoserine: Ser319, Ser322, and Ser384. The span at Ala335–Ala390 shows a compositional bias: basic and acidic residues. Positions Glu391–Lys406 are enriched in basic residues. 2 stretches are compositionally biased toward basic and acidic residues: residues Glu407–Leu464 and Ile486–Ser499. A run of 8 repeats spans residues Lys415–Asp417, Lys420–Glu422, Arg427–Glu429, Lys431–Asp433, Arg436–Glu438, Lys440–Asp442, Lys444–Glu446, and Arg449–Asp451. Residues Lys415–Glu541 are 9 X 3 AA repeats of K-K-[DE]. The residue at position 504 (Thr504) is a Phosphothreonine. Phosphoserine is present on residues Ser526 and Ser527. Residues Lys539–Glu541 form repeat 9. Basic and acidic residues-rich tracts occupy residues Lys539–Leu554 and Gln585–Val596. Disordered stretches follow at residues Lys539–Glu712, Tyr734–Glu806, Glu847–Asp1080, Thr1109–Asp1548, and Glu1573–Lys1605. Ser605 and Ser612 each carry phosphoserine. Position 616 is a phosphothreonine (Thr616). The span at Trp623 to Ser667 shows a compositional bias: basic and acidic residues. 3 positions are modified to phosphoserine: Ser644, Ser667, and Ser787. Composition is skewed to polar residues over residues Glu847 to Glu860 and Thr871 to Thr883. A phosphoserine mark is found at Ser874, Ser877, Ser878, and Ser891. Residue Thr894 is modified to Phosphothreonine. Residues Ser896, Ser900, Ser909, Ser986, Ser996, Ser1004, Ser1013, Ser1019, and Ser1029 each carry the phosphoserine modification. Positions Gly1031 to Pro1065 are enriched in basic and acidic residues. Phosphoserine occurs at positions 1069, 1144, 1146, 1160, 1172, 1190, 1200, 1203, 1209, 1218, 1221, and 1264. The segment covering Lys1131–Ser1146 has biased composition (basic and acidic residues). Over residues Ser1154 to Thr1169 the composition is skewed to polar residues. Composition is skewed to polar residues over residues Asp1211–Thr1224 and Ser1264–Asp1278. The span at Pro1289–Ser1299 shows a compositional bias: low complexity. Phosphoserine is present on residues Ser1326, Ser1329, Ser1544, Ser1600, and Ser1626. 2 stretches are compositionally biased toward basic and acidic residues: residues Ile1338–Asp1548 and Gln1586–Lys1605. The segment covering Arg1632–Arg1642 has biased composition (basic and acidic residues). Disordered regions lie at residues Arg1632–Arg1684, Asp1713–Gly1879, and Glu1892–Gly2673. Ser1654 carries the phosphoserine modification. The span at Pro1655–Glu1666 shows a compositional bias: basic and acidic residues. A phosphoserine mark is found at Ser1675, Ser1749, Ser1762, Ser1776, Ser1791, Ser1797, Ser1801, Ser1812, and Ser1818. The span at Leu1852–Ala1867 shows a compositional bias: pro residues. Basic and acidic residues predominate over residues Lys1907 to Ser1929. The residue at position 1931 (Ser1931) is a Phosphoserine. The segment covering Pro1951–Ser1964 has biased composition (basic and acidic residues). Thr1957 is modified (phosphothreonine). Polar residues predominate over residues Ser2019–Phe2033. Ser2022 is subject to Phosphoserine. The segment covering Thr2042–Ala2066 has biased composition (pro residues). Thr2058 bears the Phosphothreonine mark. Residues Ser2074, Ser2104, Ser2106, and Ser2108 each carry the phosphoserine modification. Residues Pro2086 to Ala2122 are compositionally biased toward basic and acidic residues. The span at Pro2175–Ala2184 shows a compositional bias: pro residues. Residues Ser2235, Ser2252, Ser2256, Ser2259, and Ser2260 each carry the phosphoserine modification. Over residues Glu2257–Ile2268 the composition is skewed to polar residues. Positions Ala2312–Pro2325 are enriched in low complexity. Ser2449 is subject to Phosphoserine. Residues Ile2461 to Leu2473 are compositionally biased toward basic and acidic residues. The segment covering Ser2502–Asp2514 has biased composition (low complexity). The span at Asp2559–Pro2575 shows a compositional bias: pro residues. Residues Gly2590 to Gln2602 are compositionally biased toward basic and acidic residues. Ser2649 and Ser2664 each carry phosphoserine.

This sequence belongs to the MAP1 family. 3 different light chains, LC1 (a cleavage product of MAP1B), LC2 (a cleavage product of MAP1A) and LC3 (produced by one of the MAP1LC3 genes), can associate with the MAP1A or MAP1B heavy chains. Interacts with TIAM2. Interacts with guanylate kinase-like domain of DLG1, DLG2 and DLG4. Binds to CSNK1D. As to quaternary structure, interacts with ELAVL4. In terms of processing, phosphorylated by CSNK1D. LC2 is generated from MAP1A by proteolytic processing. In terms of tissue distribution, brain.

Its subcellular location is the cytoplasm. The protein localises to the cytoskeleton. In terms of biological role, structural protein involved in the filamentous cross-bridging between microtubules and other skeletal elements. The sequence is that of Microtubule-associated protein 1A (MAP1A) from Homo sapiens (Human).